A 756-amino-acid chain; its full sequence is Phosphate transporter PHO1 homolog 6 (756 aa).

The 303-residue stretch at 1–303 (MKFGKDFSSE…SRDAAKSYMK (303 aa)) folds into the SPX domain. The Cytoplasmic segment spans residues 1 to 355 (MKFGKDFSSE…KPKRERHRLT (355 aa)). Residues 356-376 (FSTGFLGGCMFSLIVALVAIV) form a helical membrane-spanning segment. The Extracellular segment spans residues 377–396 (RTRNILQDDGQKQYMNTMFP). Residues 397–417 (LYSLFGFIMLHMTMYAANIYF) form a helical membrane-spanning segment. The Cytoplasmic portion of the chain corresponds to 418-440 (WRQYRVNYSFIFGFKQGTELGYK). Residues 441–461 (QVLFVGFSIGALALLCVLANL) traverse the membrane as a helical segment. Topologically, residues 462–477 (DMETDPKTKDYQALTE) are extracellular. Residues 478 to 498 (LLPLFLLIAMFVVLVVPFNIF) form a helical membrane-spanning segment. The Cytoplasmic portion of the chain corresponds to 499-631 (YRSSRFFFLT…DEKDRQIIWR (133 aa)). The 195-residue stretch at 562–756 (KDSQVFNTFL…SLPFNYEVDH (195 aa)) folds into the EXS domain. The helical transmembrane segment at 632-652 (LLGGITSAMAVVFCTYWDLVY) threads the bilayer. The Extracellular segment spans residues 653 to 676 (DWGLLNRTSKNPWLRDNLLIPHKE). Residues 677-697 (VYVLAMILNVVLRFAWMQTVL) traverse the membrane as a helical segment. Topologically, residues 698–756 (DFKFESIHTQTVVAVVASLEIIRRGIWNFFRLENEHLNNVGKYRAFKAVSLPFNYEVDH) are cytoplasmic.

This sequence belongs to the SYG1 (TC 2.A.94) family. In terms of tissue distribution, specifically expressed in anther connective tissue.

The protein resides in the cell membrane. Its function is as follows. May transport inorganic phosphate (Pi). This is Phosphate transporter PHO1 homolog 6 (PHO1-H6) from Arabidopsis thaliana (Mouse-ear cress).